The following is a 92-amino-acid chain: Large ribosomal subunit protein eL43A (92 aa).

A C4-type zinc finger spans residues 39 to 60 (CSFCGKKTVKRGAAGIWTCSCC). S40 is subject to Phosphoserine.

Belongs to the eukaryotic ribosomal protein eL43 family. Component of the large ribosomal subunit (LSU). Mature yeast ribosomes consist of a small (40S) and a large (60S) subunit. The 40S small subunit contains 1 molecule of ribosomal RNA (18S rRNA) and 33 different proteins (encoded by 57 genes). The large 60S subunit contains 3 rRNA molecules (25S, 5.8S and 5S rRNA) and 46 different proteins (encoded by 81 genes).

It localises to the cytoplasm. Functionally, component of the ribosome, a large ribonucleoprotein complex responsible for the synthesis of proteins in the cell. The small ribosomal subunit (SSU) binds messenger RNAs (mRNAs) and translates the encoded message by selecting cognate aminoacyl-transfer RNA (tRNA) molecules. The large subunit (LSU) contains the ribosomal catalytic site termed the peptidyl transferase center (PTC), which catalyzes the formation of peptide bonds, thereby polymerizing the amino acids delivered by tRNAs into a polypeptide chain. The nascent polypeptides leave the ribosome through a tunnel in the LSU and interact with protein factors that function in enzymatic processing, targeting, and the membrane insertion of nascent chains at the exit of the ribosomal tunnel. The sequence is that of Large ribosomal subunit protein eL43A from Saccharomyces cerevisiae (strain ATCC 204508 / S288c) (Baker's yeast).